Reading from the N-terminus, the 462-residue chain is Asparagine--tRNA ligase (462 aa).

The protein belongs to the class-II aminoacyl-tRNA synthetase family. Homodimer.

It is found in the cytoplasm. The enzyme catalyses tRNA(Asn) + L-asparagine + ATP = L-asparaginyl-tRNA(Asn) + AMP + diphosphate + H(+). In Borreliella afzelii (strain PKo) (Borrelia afzelii), this protein is Asparagine--tRNA ligase.